Reading from the N-terminus, the 1923-residue chain is Endoribonuclease Dicer (1923 aa).

One can recognise a Helicase ATP-binding domain in the interval 51 to 227 (LLEAALDHNT…ELEEKIQKLE (177 aa)). 64–71 (LNTGSGKT) contributes to the ATP binding site. The DECH box signature appears at 175 to 178 (DECH). Residues 256 to 595 (DCGPFTDRSG…LRNKCSKSVD (340 aa)) are required for interaction with PRKRA and TARBP2. The interval 410–433 (VSWSDSEDDEEDEEIEEKEKPETN) is disordered. Residues Ser-413 and Ser-415 each carry the phosphoserine modification. Positions 414–425 (DSEDDEEDEEIE) are enriched in acidic residues. A Helicase C-terminal domain is found at 433 to 602 (NFPSPFTNIL…SVDTGEADTE (170 aa)). Residues 629 to 721 (AIGHVNRYCA…MPVGKETVKY (93 aa)) form the Dicer dsRNA-binding fold domain. The region spanning 894 to 1041 (KFMEDIEKSE…LVPELCAIHP (148 aa)) is the PAZ domain. Phosphoserine is present on residues Ser-1015 and Ser-1160. Polar residues-rich tracts occupy residues 1246-1255 (NANTSTSDGS) and 1277-1290 (SEQS…SRTL). The disordered stretch occupies residues 1246–1291 (NANTSTSDGSPVTAAVPGTTETGEAPPDRTASEQSPSPGYSSRTLG). Residues 1276 to 1404 (ASEQSPSPGY…TEKWEKDEMT (129 aa)) enclose the RNase III 1 domain. 3 residues coordinate Mg(2+): Glu-1316, Glu-1396, and Glu-1399. A phosphoserine mark is found at Ser-1461, Ser-1469, and Ser-1471. The 159-residue stretch at 1667–1825 (FENFEKKINY…LAGAIYMDSG (159 aa)) folds into the RNase III 2 domain. Residues Glu-1706, Asp-1811, and Glu-1814 each contribute to the Mg(2+) site. A DRBM domain is found at 1853–1915 (SPVRELLEME…ARRALRSLKA (63 aa)). Residue Ser-1869 is modified to Phosphoserine.

This sequence belongs to the helicase family. Dicer subfamily. As to quaternary structure, component of the RISC loading complex (RLC), or micro-RNA (miRNA) loading complex (miRLC), which is composed of DICER1, AGO2 and TARBP2; DICER1 and TARBP2 are required to process precursor miRNAs (pre-miRNAs) to mature miRNAs and then load them onto AGO2. Note that the trimeric RLC/miRLC is also referred to as RISC. Interacts with DHX9, AGO1, PIWIL1 and PRKRA. Interacts with AGO2, TARBP2, EIF6, MOV10 and RPL7A (60S ribosome subunit); they form a large RNA-induced silencing complex (RISC). Interacts with BCDIN3D. Interacts (via Dicer dsRNA-binding fold domain) with ALOX5 (via PLAT domain); this interaction enhances arachidonate 5-lipoxygenase activity and modifies the miRNA precursor processing activity of DICER1. Mg(2+) serves as cofactor. Requires Mn(2+) as cofactor.

Its subcellular location is the cytoplasm. The catalysed reaction is Endonucleolytic cleavage to 5'-phosphomonoester.. Double-stranded RNA (dsRNA) endoribonuclease playing a central role in short dsRNA-mediated post-transcriptional gene silencing. Cleaves naturally occurring long dsRNAs and short hairpin pre-microRNAs (miRNA) into fragments of twenty-one to twenty-three nucleotides with 3' overhang of two nucleotides, producing respectively short interfering RNAs (siRNA) and mature microRNAs. SiRNAs and miRNAs serve as guide to direct the RNA-induced silencing complex (RISC) to complementary RNAs to degrade them or prevent their translation. Gene silencing mediated by siRNAs, also called RNA interference, controls the elimination of transcripts from mobile and repetitive DNA elements of the genome but also the degradation of exogenous RNA of viral origin for instance. The miRNA pathway on the other side is a mean to specifically regulate the expression of target genes. The chain is Endoribonuclease Dicer (DICER1) from Bos taurus (Bovine).